A 427-amino-acid polypeptide reads, in one-letter code: Glutamate-1-semialdehyde 2,1-aminomutase (427 aa).

The residue at position 269 (lysine 269) is an N6-(pyridoxal phosphate)lysine.

This sequence belongs to the class-III pyridoxal-phosphate-dependent aminotransferase family. HemL subfamily. As to quaternary structure, homodimer. The cofactor is pyridoxal 5'-phosphate.

It is found in the cytoplasm. It catalyses the reaction (S)-4-amino-5-oxopentanoate = 5-aminolevulinate. Its pathway is porphyrin-containing compound metabolism; protoporphyrin-IX biosynthesis; 5-aminolevulinate from L-glutamyl-tRNA(Glu): step 2/2. This is Glutamate-1-semialdehyde 2,1-aminomutase from Thermus thermophilus (strain ATCC BAA-163 / DSM 7039 / HB27).